The sequence spans 58 residues: uncharacterized protein (58 aa).

The helical transmembrane segment at 18-38 (WLMIVLLFCSTGMVFLATILE) threads the bilayer.

Its subcellular location is the membrane. This is an uncharacterized protein from Saccharomyces cerevisiae (strain ATCC 204508 / S288c) (Baker's yeast).